We begin with the raw amino-acid sequence, 563 residues long: Arginine--tRNA ligase (563 aa).

The 'HIGH' region signature appears at 121 to 131 (PNIAKPFSIGH).

The protein belongs to the class-I aminoacyl-tRNA synthetase family. Monomer.

It localises to the cytoplasm. It carries out the reaction tRNA(Arg) + L-arginine + ATP = L-arginyl-tRNA(Arg) + AMP + diphosphate. The sequence is that of Arginine--tRNA ligase from Streptococcus pyogenes serotype M49 (strain NZ131).